The primary structure comprises 77 residues: uncharacterized protein (77 aa).

The HTH cro/C1-type domain maps to 13 to 67; that stretch reads VLQYMVNNDYSLNQLALEIGVSPATLSRVLNGERRPGQLVIGKMLHYFNLKFEDL. A DNA-binding region (H-T-H motif) is located at residues 24-43; it reads LNQLALEIGVSPATLSRVLN.

It is found in the cytoplasm. This is an uncharacterized protein from Bacillus subtilis (strain 168).